The primary structure comprises 337 residues: Glyceraldehyde-3-phosphate dehydrogenase 2, cytosolic (337 aa).

The binding to NAD stretch occupies residues 1-151 (MGKIKIGING…YTSDVNIVSN (151 aa)). NAD(+) is bound by residues 13–14 (RI), Asp35, and Arg82. Residues 152 to 337 (ASCTTNCLAP…DLIRHMFKTQ (186 aa)) are catalytic. Residues 153–155 (SCT), Thr184, 213–214 (TG), and Arg236 each bind D-glyceraldehyde 3-phosphate. The Nucleophile role is filled by Cys154. Position 318 (Asn318) interacts with NAD(+).

Belongs to the glyceraldehyde-3-phosphate dehydrogenase family. In terms of assembly, homotetramer. As to expression, developing seeds, seedling roots and shoots, and embryo.

It is found in the cytoplasm. It carries out the reaction D-glyceraldehyde 3-phosphate + phosphate + NAD(+) = (2R)-3-phospho-glyceroyl phosphate + NADH + H(+). It functions in the pathway carbohydrate degradation; glycolysis; pyruvate from D-glyceraldehyde 3-phosphate: step 1/5. Functionally, key enzyme in glycolysis that catalyzes the first step of the pathway by converting D-glyceraldehyde 3-phosphate (G3P) into 3-phospho-D-glyceroyl phosphate. Essential for the maintenance of cellular ATP levels and carbohydrate metabolism. This Zea mays (Maize) protein is Glyceraldehyde-3-phosphate dehydrogenase 2, cytosolic (GAPC2).